The chain runs to 301 residues: Homoserine O-acetyltransferase (301 aa).

Residue C142 is the Acyl-thioester intermediate of the active site. Substrate is bound by residues K163 and S192. Catalysis depends on H235, which acts as the Proton acceptor. E237 is an active-site residue. R249 serves as a coordination point for substrate.

This sequence belongs to the MetA family.

It localises to the cytoplasm. The catalysed reaction is L-homoserine + acetyl-CoA = O-acetyl-L-homoserine + CoA. It participates in amino-acid biosynthesis; L-methionine biosynthesis via de novo pathway; O-acetyl-L-homoserine from L-homoserine: step 1/1. Its function is as follows. Transfers an acetyl group from acetyl-CoA to L-homoserine, forming acetyl-L-homoserine. The protein is Homoserine O-acetyltransferase of Bacillus cereus (strain ZK / E33L).